Reading from the N-terminus, the 441-residue chain is Velvet complex subunit B (441 aa).

One can recognise a Velvet domain in the interval 1 to 173 (MSTLGQGDFE…SDQGVRLRLR (173 aa)). Disordered stretches follow at residues 200 to 220 (GYLP…PHHL), 234 to 295 (RSRS…ETDT), and 341 to 396 (MPSP…PSYA). 2 stretches are compositionally biased toward low complexity: residues 272–283 (DGASPDSPHPSS) and 361–375 (PAGA…FSPG).

The protein belongs to the velvet family. VelB subfamily. As to quaternary structure, component of the heterotrimeric velvet complex composed of laeA, veA and velB; VeA acting as a bridging protein between laeA and velB.

The protein localises to the nucleus. It localises to the cytoplasm. Its function is as follows. Component of the velvet transcription factor complex that controls sexual/asexual developmental ratio in response to light, promoting sexual development in the darkness while stimulating asexual sporulation under illumination. The velvet complex acts as a global regulator for secondary metabolite gene expression and is required for the production of chaetoglobosin A. This chain is Velvet complex subunit B, found in Chaetomium globosum (strain ATCC 6205 / CBS 148.51 / DSM 1962 / NBRC 6347 / NRRL 1970) (Soil fungus).